The sequence spans 223 residues: F420-dependent NADP reductase (223 aa).

NADP(+) is bound by residues 9-12, 30-31, Lys-35, Leu-75, and Val-101; these read TGDQ and SR.

Belongs to the F420-dependent NADP reductase family.

It catalyses the reaction reduced coenzyme F420-(gamma-L-Glu)(n) + NADP(+) = oxidized coenzyme F420-(gamma-L-Glu)(n) + NADPH + 2 H(+). Functionally, catalyzes the reduction of NADP(+) with F420H(2) via hydride transfer, and the reverse reaction, i.e. the reduction of F420 with NADPH. Probably functions in the regeneration of NADPH required in biosynthetic reactions. This chain is F420-dependent NADP reductase (fno), found in Methanocaldococcus jannaschii (strain ATCC 43067 / DSM 2661 / JAL-1 / JCM 10045 / NBRC 100440) (Methanococcus jannaschii).